Reading from the N-terminus, the 341-residue chain is N-acetyl-gamma-glutamyl-phosphate reductase (341 aa).

Residue Cys-147 is part of the active site.

The protein belongs to the NAGSA dehydrogenase family. Type 1 subfamily.

It is found in the cytoplasm. It catalyses the reaction N-acetyl-L-glutamate 5-semialdehyde + phosphate + NADP(+) = N-acetyl-L-glutamyl 5-phosphate + NADPH + H(+). It participates in amino-acid biosynthesis; L-arginine biosynthesis; N(2)-acetyl-L-ornithine from L-glutamate: step 3/4. Its function is as follows. Catalyzes the NADPH-dependent reduction of N-acetyl-5-glutamyl phosphate to yield N-acetyl-L-glutamate 5-semialdehyde. In Dehalococcoides mccartyi (strain ATCC BAA-2266 / KCTC 15142 / 195) (Dehalococcoides ethenogenes (strain 195)), this protein is N-acetyl-gamma-glutamyl-phosphate reductase.